The primary structure comprises 1091 residues: MLPAAALPWTLFFLGAAASLQVDIVPSQGEISVGESKFFLCQVAGEAKYKDISWFSPNGEKLTPNQQRISVVRNDDFSSTLTIYNANIDDAGIYKCVVSSVEEGDSEATVNVKIFQKLMFKNAPTPQEFKEGDDAVIVCDVVSSLPPTIIWKHKGRDVMLKKDVRFIVLSNNYLQIRGIKKTDEGTYRCEGRILARGEINFKDIQVIVNVPPSVRARQSTMNATANLSQSVTLACDADGFPEPTMTWTKDGEPIEQEDNEEKYSFNYDGSELIIKKVDKSDEAEYICIAENKAGEQDATIHLKVFAKPKITYVENKTAMELEDQITLTCEASGDPIPSITWKTSTRNISNEEKTLDGRIVVRSHARVSSLTLKEIQYTDAGEYVCTASNTIGQDSQAMYLEVQYAPKLQGPVAVYTWEGNQVNITCEVFAYPSAVISWFRDGQLLPSSNYSNIKIYNTPSASYLEVTPDSENDFGNYNCTAVNRIGQESSEFILVQADTPSSPSIDRVEPYSSTARVEFDEPEATGGVPILKYKAEWRALGEGEWHSRLYDAKEANVEGTITISGLKPETTYSVRLSAVNGKGVGEISLPSDFKTQPVREPSAPKLEGQMGEDGNSIKVNVIKQDDGGSPIRHYLIKYKAKHSSEWKPEIRLPSGIDHVMLKSLDWNAEYEVYVIAENQQGKSKPAHYAFRTSAQPTVIPASTSPTSGLGTAAIVGILIVIFVLLLVAVDVTCYFLNKCGLLMCIAVNLCGKSGPGAKGKDMEEGKAAFSKDESKEPIVEVRTEEERTPNHDGGKHTEPNETTPLTEPEHTADTAATVEDMLPSVTTGTTNSDTITETFATAQNSPTSETTTLTSSIAPPATAIPDSNAMSPGQATPAKAGASPVSPPPPSSTPKVAPLVDLSDTPSSAPATNNLSSSVLSNQGAVLSPSTVANMAETSKAAAGNKSAAPTPANLTSPPAPSEPKQEVSSTKSPEKEAAQPSTVKSPTETAKNPSNPKSEAASGGTTNPSQNEDFKMDEGTFKTPDIDLAKDVFAALGTTTPASVASGQARELASSTADSSVPAAPAKTEKTPVEDKSEVQATEIRHLQQK.

The N-terminal stretch at 1-19 (MLPAAALPWTLFFLGAAAS) is a signal peptide. Ig-like C2-type domains lie at 20–113 (LQVD…VNVK), 116–205 (QKLM…KDIQ), 212–301 (PSVR…ATIH), 308–403 (PKIT…LEVQ), and 406–495 (PKLQ…FILV). The Extracellular segment spans residues 20–711 (LQVDIVPSQG…STSPTSGLGT (692 aa)). 2 cysteine pairs are disulfide-bonded: Cys-41–Cys-96 and Cys-139–Cys-189. Residues 152-156 (KHKGR) and 161-165 (KKDVR) each bind heparin. The N-linked (GlcNAc...) asparagine glycan is linked to Asn-222. Cys-235 and Cys-287 are joined by a disulfide. Residues Asn-315, Asn-347, Asn-423, Asn-449, and Asn-478 are each glycosylated (N-linked (GlcNAc...) asparagine). A disulfide bridge links Cys-329 with Cys-385. A disulfide bond links Cys-426 and Cys-479. 2 Fibronectin type-III domains span residues 499 to 598 (TPSS…TQPV) and 600 to 696 (EPSA…SAQP). A helical transmembrane segment spans residues 712–729 (AAIVGILIVIFVLLLVAV). The Cytoplasmic segment spans residues 730-1091 (DVTCYFLNKC…ATEIRHLQQK (362 aa)). 4 disordered regions span residues 756–809 (GAKG…TEPE), 840–916 (ATAQ…NNLS), 937–1023 (ETSK…GTFK), and 1041–1091 (TPAS…LQQK). Residues 758–799 (KGKDMEEGKAAFSKDESKEPIVEVRTEEERTPNHDGGKHTEP) show a composition bias toward basic and acidic residues. The span at 845–856 (SPTSETTTLTSS) shows a compositional bias: low complexity. Composition is skewed to polar residues over residues 904 to 916 (DTPSSAPATNNLS) and 980 to 1012 (QPSTVKSPTETAKNPSNPKSEAASGGTTNPSQN). 2 stretches are compositionally biased toward basic and acidic residues: residues 1013–1023 (EDFKMDEGTFK) and 1068–1091 (KTEKTPVEDKSEVQATEIRHLQQK).

In terms of processing, polysialylated by ST8SIA2 and ST8SIA4. Polysialylation modulates cell interactions by confering both attractive and repulsive properties that are highly regulated by ST8SIA2 and ST8SIA4. Polysialylation is formed on a-2,3-linked sialic acid of core glycans.

It is found in the cell membrane. In terms of biological role, this protein is a cell adhesion molecule involved in neuron-neuron adhesion, neurite fasciculation, outgrowth of neurites, etc. The chain is Neural cell adhesion molecule 1 from Gallus gallus (Chicken).